A 136-amino-acid polypeptide reads, in one-letter code: NADPH-dependent 7-cyano-7-deazaguanine reductase (136 aa).

The Thioimide intermediate role is filled by cysteine 50. Aspartate 57 acts as the Proton donor in catalysis. Substrate-binding positions include 72–74 (YEL) and 91–92 (HE).

This sequence belongs to the GTP cyclohydrolase I family. QueF type 1 subfamily.

The protein localises to the cytoplasm. The catalysed reaction is 7-aminomethyl-7-carbaguanine + 2 NADP(+) = 7-cyano-7-deazaguanine + 2 NADPH + 3 H(+). Its pathway is tRNA modification; tRNA-queuosine biosynthesis. Functionally, catalyzes the NADPH-dependent reduction of 7-cyano-7-deazaguanine (preQ0) to 7-aminomethyl-7-deazaguanine (preQ1). In Prochlorococcus marinus (strain MIT 9515), this protein is NADPH-dependent 7-cyano-7-deazaguanine reductase.